Reading from the N-terminus, the 239-residue chain is tRNA (guanine-N(1)-)-methyltransferase (239 aa).

S-adenosyl-L-methionine contacts are provided by residues glycine 108 and 127 to 132; that span reads LGDFVL.

It belongs to the RNA methyltransferase TrmD family. As to quaternary structure, homodimer.

It localises to the cytoplasm. The catalysed reaction is guanosine(37) in tRNA + S-adenosyl-L-methionine = N(1)-methylguanosine(37) in tRNA + S-adenosyl-L-homocysteine + H(+). In terms of biological role, specifically methylates guanosine-37 in various tRNAs. This chain is tRNA (guanine-N(1)-)-methyltransferase, found in Streptococcus thermophilus (strain ATCC BAA-250 / LMG 18311).